An 80-amino-acid polypeptide reads, in one-letter code: Toxin Acra1 (80 aa).

The signal sequence occupies residues 1 to 22; the sequence is MMKLVLFSIIVILFSLIGSIHG. The 56-residue stretch at 25–80 folds into the LCN-type CS-alpha/beta domain; the sequence is VPGNYPLDSSGNKYPCTVLGDNQSCIDVCKKHGVKYGYCYSFKCWCEFLEDKNVSI. 3 disulfide bridges follow: Cys-40–Cys-63, Cys-49–Cys-68, and Cys-53–Cys-70.

As to expression, expressed by the venom gland.

It localises to the secreted. In terms of biological role, probable neurotoxin that inhibits ion channels. Is toxic to mice. Is about 2.8% of the total protein in the venom. The sequence is that of Toxin Acra1 from Androctonus crassicauda (Arabian fat-tailed scorpion).